The sequence spans 247 residues: 1-(5-phosphoribosyl)-5-[(5-phosphoribosylamino)methylideneamino] imidazole-4-carboxamide isomerase (247 aa).

The active-site Proton acceptor is Asp-8. The active-site Proton donor is Asp-130.

The protein belongs to the HisA/HisF family.

Its subcellular location is the cytoplasm. It catalyses the reaction 1-(5-phospho-beta-D-ribosyl)-5-[(5-phospho-beta-D-ribosylamino)methylideneamino]imidazole-4-carboxamide = 5-[(5-phospho-1-deoxy-D-ribulos-1-ylimino)methylamino]-1-(5-phospho-beta-D-ribosyl)imidazole-4-carboxamide. Its pathway is amino-acid biosynthesis; L-histidine biosynthesis; L-histidine from 5-phospho-alpha-D-ribose 1-diphosphate: step 4/9. The polypeptide is 1-(5-phosphoribosyl)-5-[(5-phosphoribosylamino)methylideneamino] imidazole-4-carboxamide isomerase (Leptospira biflexa serovar Patoc (strain Patoc 1 / Ames)).